A 145-amino-acid polypeptide reads, in one-letter code: MRTTFMAKANEVERKWYVVDAEGQTLGRLASEVASILRGKNKPTFTPHVDTGDHVIIINAEKIHLTGNKLNDKMYYRHTNHPGGLKQRTALVLRTNYPVQMLELAIKGMLPKGRLGRQVSKKLNVYAGAEHPHQAQKPEVYELRG.

It belongs to the universal ribosomal protein uL13 family. In terms of assembly, part of the 50S ribosomal subunit.

This protein is one of the early assembly proteins of the 50S ribosomal subunit, although it is not seen to bind rRNA by itself. It is important during the early stages of 50S assembly. In Bacillus cereus (strain ZK / E33L), this protein is Large ribosomal subunit protein uL13.